A 321-amino-acid polypeptide reads, in one-letter code: Phosphate-import protein PhnD (321 aa).

The first 22 residues, 1 to 22 (MKIRAHHKIATAAACVALLASA), serve as a signal peptide directing secretion. C23 is lipidated: N-palmitoyl cysteine. The S-diacylglycerol cysteine moiety is linked to residue C23.

This sequence belongs to the phosphate/phosphite/phosphonate binding protein family. In terms of assembly, the complex is composed of two ATP-binding proteins (PhnC), two transmembrane proteins (PhnE) and a solute-binding protein (PhnD).

The protein resides in the cell membrane. Functionally, part of the ABC transporter complex PhnCDE involved in phosphate import. Responsible for phosphate binding. This Mycolicibacterium smegmatis (strain ATCC 700084 / mc(2)155) (Mycobacterium smegmatis) protein is Phosphate-import protein PhnD (phnD).